The following is a 293-amino-acid chain: 4-diphosphocytidyl-2-C-methyl-D-erythritol kinase (293 aa).

Residue Lys-16 is part of the active site. Residue 99–109 (PMGAGLGGGSS) participates in ATP binding. Asp-141 is a catalytic residue.

This sequence belongs to the GHMP kinase family. IspE subfamily.

It carries out the reaction 4-CDP-2-C-methyl-D-erythritol + ATP = 4-CDP-2-C-methyl-D-erythritol 2-phosphate + ADP + H(+). The protein operates within isoprenoid biosynthesis; isopentenyl diphosphate biosynthesis via DXP pathway; isopentenyl diphosphate from 1-deoxy-D-xylulose 5-phosphate: step 3/6. Functionally, catalyzes the phosphorylation of the position 2 hydroxy group of 4-diphosphocytidyl-2C-methyl-D-erythritol. The protein is 4-diphosphocytidyl-2-C-methyl-D-erythritol kinase of Burkholderia thailandensis (strain ATCC 700388 / DSM 13276 / CCUG 48851 / CIP 106301 / E264).